Consider the following 575-residue polypeptide: Arginine--tRNA ligase (575 aa).

The short motif at 131-141 is the 'HIGH' region element; the sequence is ANPTGPLHVGH.

The protein belongs to the class-I aminoacyl-tRNA synthetase family. As to quaternary structure, monomer.

It is found in the cytoplasm. The enzyme catalyses tRNA(Arg) + L-arginine + ATP = L-arginyl-tRNA(Arg) + AMP + diphosphate. The polypeptide is Arginine--tRNA ligase (Jannaschia sp. (strain CCS1)).